Reading from the N-terminus, the 118-residue chain is Large ribosomal subunit protein bL19 (118 aa).

It belongs to the bacterial ribosomal protein bL19 family.

In terms of biological role, this protein is located at the 30S-50S ribosomal subunit interface and may play a role in the structure and function of the aminoacyl-tRNA binding site. The polypeptide is Large ribosomal subunit protein bL19 (Citrifermentans bemidjiense (strain ATCC BAA-1014 / DSM 16622 / JCM 12645 / Bem) (Geobacter bemidjiensis)).